A 154-amino-acid chain; its full sequence is Myoglobin (154 aa).

Positions 2–148 (GLSDGEWQLV…FRNDMAAKYK (147 aa)) constitute a Globin domain. Phosphoserine is present on Ser-4. His-65 provides a ligand contact to nitrite. His-65 is an O2 binding site. A Phosphothreonine modification is found at Thr-68. His-94 contacts heme b.

The protein belongs to the globin family. In terms of assembly, monomeric.

It is found in the cytoplasm. Its subcellular location is the sarcoplasm. It carries out the reaction Fe(III)-heme b-[protein] + nitric oxide + H2O = Fe(II)-heme b-[protein] + nitrite + 2 H(+). It catalyses the reaction H2O2 + AH2 = A + 2 H2O. Functionally, monomeric heme protein which primary function is to store oxygen and facilitate its diffusion within muscle tissues. Reversibly binds oxygen through a pentacoordinated heme iron and enables its timely and efficient release as needed during periods of heightened demand. Depending on the oxidative conditions of tissues and cells, and in addition to its ability to bind oxygen, it also has a nitrite reductase activity whereby it regulates the production of bioactive nitric oxide. Under stress conditions, like hypoxia and anoxia, it also protects cells against reactive oxygen species thanks to its pseudoperoxidase activity. This is Myoglobin (MB) from Ochotona curzoniae (Black-lipped pika).